A 202-amino-acid chain; its full sequence is 3-isopropylmalate dehydratase small subunit (202 aa).

The protein belongs to the LeuD family. LeuD type 1 subfamily. In terms of assembly, heterodimer of LeuC and LeuD.

The enzyme catalyses (2R,3S)-3-isopropylmalate = (2S)-2-isopropylmalate. It participates in amino-acid biosynthesis; L-leucine biosynthesis; L-leucine from 3-methyl-2-oxobutanoate: step 2/4. Its function is as follows. Catalyzes the isomerization between 2-isopropylmalate and 3-isopropylmalate, via the formation of 2-isopropylmaleate. The chain is 3-isopropylmalate dehydratase small subunit from Paenarthrobacter aurescens (strain TC1).